Reading from the N-terminus, the 371-residue chain is uncharacterized protein (371 aa).

Solcar repeat units follow at residues 3–98 (DDSL…CKVL), 131–276 (RYWG…FKSF), and 284–369 (KSNF…VRKW). Transmembrane regions (helical) follow at residues 9–29 (AIAG…LDVV), 73–93 (GVGP…VVYE), 137–157 (IFSA…IWVV), 253–273 (LFPS…YEYF), 290–310 (VLAA…HEVL), and 341–362 (YYSG…TFLS).

This sequence belongs to the mitochondrial carrier (TC 2.A.29) family.

It is found in the mitochondrion inner membrane. This is an uncharacterized protein from Schizosaccharomyces pombe (strain 972 / ATCC 24843) (Fission yeast).